The chain runs to 79 residues: Cytochrome c oxidase subunit 7A1, mitochondrial (79 aa).

Residues 1–21 (MQALRVSQALIRSFSSTARNR) constitute a mitochondrion transit peptide. The Mitochondrial matrix portion of the chain corresponds to 22–46 (FQNRVREKQKLFQEDNDIPLYLKGG). Residues 47–75 (IVDNILYRVTMTLCLGGTVYSLYSLGWAS) form a helical membrane-spanning segment. At 76-79 (FPRN) the chain is on the mitochondrial intermembrane side.

It belongs to the cytochrome c oxidase VIIa family. As to quaternary structure, component of the complex IV (CIV, cytochrome c oxidase), a multisubunit enzyme composed of 14 subunits. The complex is composed of a catalytic core of 3 subunits MT-CO1, MT-CO2 and MT-CO3, encoded in the mitochondrial DNA, and 11 supernumerary subunits COX4I1 (or COX4I2), COX5A, COX5B, COX6A2 (or COX6A1), COX6B1 (or COX6B2), COX6C, COX7A1 (or COX7A2), COX7B, COX7C, COX8B and NDUFA4, which are encoded in the nuclear genome. The complex exists as a monomer or a dimer and forms supercomplexes (SCs) in the inner mitochondrial membrane with NADH-ubiquinone oxidoreductase (complex I, CI) and ubiquinol-cytochrome c oxidoreductase (cytochrome b-c1 complex, complex III, CIII), resulting in different assemblies (supercomplex SCI(1)III(2)IV(1) and megacomplex MCI(2)III(2)IV(2)).

It localises to the mitochondrion inner membrane. It participates in energy metabolism; oxidative phosphorylation. Its function is as follows. Component of the mitochondrial respiratory complex IV (CIV, also named cytochrome c oxidase complex), the last enzyme in the mitochondrial electron transport chain which drives oxidative phosphorylation. The CIV complex is the component of the respiratory chain that catalyzes the reduction of oxygen to water. Acts as an assembly factor that specifically drives the homodimerization of CIV complexes, mediating the formation of mitochondrial respiratory supercomplexes (respirasomes) containing two CIV: supercomplxes with two molecules of CIV show improved activity. Despite being highly expressed in brown adipose tissue, not required for thermogenesis. In Homo sapiens (Human), this protein is Cytochrome c oxidase subunit 7A1, mitochondrial (COX7A1).